The following is a 337-amino-acid chain: tRNA N6-adenosine threonylcarbamoyltransferase (337 aa).

The Fe cation site is built by histidine 111 and histidine 115. Residues 134 to 138 (LVSGG), aspartate 167, glycine 180, and asparagine 272 each bind substrate. Aspartate 300 serves as a coordination point for Fe cation.

This sequence belongs to the KAE1 / TsaD family. The cofactor is Fe(2+).

The protein resides in the cytoplasm. It catalyses the reaction L-threonylcarbamoyladenylate + adenosine(37) in tRNA = N(6)-L-threonylcarbamoyladenosine(37) in tRNA + AMP + H(+). Required for the formation of a threonylcarbamoyl group on adenosine at position 37 (t(6)A37) in tRNAs that read codons beginning with adenine. Is involved in the transfer of the threonylcarbamoyl moiety of threonylcarbamoyl-AMP (TC-AMP) to the N6 group of A37, together with TsaE and TsaB. TsaD likely plays a direct catalytic role in this reaction. This is tRNA N6-adenosine threonylcarbamoyltransferase from Escherichia coli O157:H7.